Here is a 447-residue protein sequence, read N- to C-terminus: Tubulin beta chain (447 aa).

GTP is bound by residues Q11, E69, S138, G142, T143, G144, N204, and N226. Residue E69 coordinates Mg(2+). Residues 427-447 (DAGIDEEEEEYEEELPLEGEE) are disordered. Over residues 429-447 (GIDEEEEEYEEELPLEGEE) the composition is skewed to acidic residues.

The protein belongs to the tubulin family. As to quaternary structure, dimer of alpha and beta chains. A typical microtubule is a hollow water-filled tube with an outer diameter of 25 nm and an inner diameter of 15 nM. Alpha-beta heterodimers associate head-to-tail to form protofilaments running lengthwise along the microtubule wall with the beta-tubulin subunit facing the microtubule plus end conferring a structural polarity. Microtubules usually have 13 protofilaments but different protofilament numbers can be found in some organisms and specialized cells. The cofactor is Mg(2+).

The protein localises to the cytoplasm. It localises to the cytoskeleton. Its function is as follows. Tubulin is the major constituent of microtubules, a cylinder consisting of laterally associated linear protofilaments composed of alpha- and beta-tubulin heterodimers. Microtubules grow by the addition of GTP-tubulin dimers to the microtubule end, where a stabilizing cap forms. Below the cap, tubulin dimers are in GDP-bound state, owing to GTPase activity of alpha-tubulin. This is Tubulin beta chain (TUB2) from Hapsidospora chrysogena (Acremonium chrysogenum).